A 215-amino-acid chain; its full sequence is Nascent polypeptide-associated complex subunit alpha (215 aa).

The tract at residues 1–81 is disordered; it reads MPGEATETVP…SEKKARKAMS (81 aa). Residues 9–28 are compositionally biased toward polar residues; sequence VPATEQELPQPQAETGSGTE. Residues 29-40 are compositionally biased toward acidic residues; sequence SDSDESVPELEG. Serine 43 is subject to Phosphoserine; by ILK1. The span at 44-57 shows a compositional bias: low complexity; sequence TQATTQQAQLAAAA. The required for DNA-binding stretch occupies residues 69 to 80; sequence QSRSEKKARKAM. Residues 70–135 form the NAC-A/B domain; it reads SRSEKKARKA…AKIEDLSQQA (66 aa). The segment at 93–108 is RNA/DNA-binding; sequence RVTIRKSKNILFVITK. Serine 132 bears the Phosphoserine mark. Lysine 142 is subject to N6-acetyllysine; alternate. Lysine 142 is covalently cross-linked (Glycyl lysine isopeptide (Lys-Gly) (interchain with G-Cter in SUMO2); alternate). Threonine 159 is subject to Phosphothreonine; by GSK3-beta. Residue threonine 161 is modified to Phosphothreonine. Phosphoserine is present on residues serine 166, serine 186, serine 191, and serine 203. Residues 176 to 213 enclose the UBA domain; that stretch reads VEVKDIEWVMSQANVSRAKAVRALKNNSNNIVNAIMEL.

Belongs to the NAC-alpha family. In terms of assembly, part of the nascent polypeptide-associated complex (NAC), which is a heterodimer of NACA and BTF3 (via NAC-A/B domains). NAC associates with ribosomes through the BTF3/NACB subunit and contacts the ribosomal protein L23, which is positioned near the exiting site. Both subunits can contact nascent polypeptide chains. NACA may also form homodimers, and only this form binds DNA. Interacts with TBP and JUN. Post-translationally, phosphorylation of Ser-43 by ILK during cell adhesion may promote nuclear localization. Phosphorylation of Thr-159 by GSK3B may promote proteasome mediated degradation.

Its subcellular location is the cytoplasm. The protein localises to the nucleus. Functionally, prevents inappropriate targeting of non-secretory polypeptides to the endoplasmic reticulum (ER). Binds to nascent polypeptide chains as they emerge from the ribosome and blocks their interaction with the signal recognition particle (SRP), which normally targets nascent secretory peptides to the ER. Also reduces the inherent affinity of ribosomes for protein translocation sites in the ER membrane (M sites). May act as a specific coactivator for JUN, binding to DNA and stabilizing the interaction of JUN homodimers with target gene promoters. The chain is Nascent polypeptide-associated complex subunit alpha from Chinchilla lanigera (Long-tailed chinchilla).